Here is a 457-residue protein sequence, read N- to C-terminus: UDP-N-acetylmuramoylalanine--D-glutamate ligase (457 aa).

116-122 (GTNGKTT) is an ATP binding site.

This sequence belongs to the MurCDEF family.

The protein resides in the cytoplasm. The catalysed reaction is UDP-N-acetyl-alpha-D-muramoyl-L-alanine + D-glutamate + ATP = UDP-N-acetyl-alpha-D-muramoyl-L-alanyl-D-glutamate + ADP + phosphate + H(+). It participates in cell wall biogenesis; peptidoglycan biosynthesis. In terms of biological role, cell wall formation. Catalyzes the addition of glutamate to the nucleotide precursor UDP-N-acetylmuramoyl-L-alanine (UMA). The chain is UDP-N-acetylmuramoylalanine--D-glutamate ligase from Caldicellulosiruptor bescii (strain ATCC BAA-1888 / DSM 6725 / KCTC 15123 / Z-1320) (Anaerocellum thermophilum).